Here is a 118-residue protein sequence, read N- to C-terminus: MHEMSLVTGILSIIQEEMSKNGVNKLQRVKVCYGELTNIVPDSLQFAFKIFTEGTSLEGAILEIEKIPLMLRCSNCLSLFTPEDKQKIFFITCPSCKKEVAYNVETGREFYIQHLEVE.

Histidine 2 contributes to the Ni(2+) binding site. The Zn(2+) site is built by cysteine 73, cysteine 76, cysteine 93, and cysteine 96.

This sequence belongs to the HypA/HybF family.

In terms of biological role, involved in the maturation of [NiFe] hydrogenases. Required for nickel insertion into the metal center of the hydrogenase. The sequence is that of Hydrogenase maturation factor HypA from Lawsonia intracellularis (strain PHE/MN1-00).